A 607-amino-acid polypeptide reads, in one-letter code: Elongation factor 4 (607 aa).

The tr-type G domain occupies 11-193 (ENIRNFSIIA…KIVEVVPAPD (183 aa)). GTP is bound by residues 23 to 28 (DHGKST) and 140 to 143 (NKID).

It belongs to the TRAFAC class translation factor GTPase superfamily. Classic translation factor GTPase family. LepA subfamily.

Its subcellular location is the cell membrane. It catalyses the reaction GTP + H2O = GDP + phosphate + H(+). Its function is as follows. Required for accurate and efficient protein synthesis under certain stress conditions. May act as a fidelity factor of the translation reaction, by catalyzing a one-codon backward translocation of tRNAs on improperly translocated ribosomes. Back-translocation proceeds from a post-translocation (POST) complex to a pre-translocation (PRE) complex, thus giving elongation factor G a second chance to translocate the tRNAs correctly. Binds to ribosomes in a GTP-dependent manner. The chain is Elongation factor 4 from Staphylococcus aureus (strain USA300).